A 330-amino-acid chain; its full sequence is Putative protein N-methyltransferase FAM86B2 (330 aa).

An N-acetylmethionine modification is found at Met-1. S-adenosyl-L-methionine contacts are provided by residues Trp-139, 165-167, Trp-228, and Ala-247; that span reads GSG.

Belongs to the class I-like SAM-binding methyltransferase superfamily. EEF2KMT family. Interacts with EEF2KMT.

This is Putative protein N-methyltransferase FAM86B2 (FAM86B2) from Homo sapiens (Human).